The following is a 194-amino-acid chain: Imidazoleglycerol-phosphate dehydratase (194 aa).

It belongs to the imidazoleglycerol-phosphate dehydratase family.

It is found in the cytoplasm. The enzyme catalyses D-erythro-1-(imidazol-4-yl)glycerol 3-phosphate = 3-(imidazol-4-yl)-2-oxopropyl phosphate + H2O. It participates in amino-acid biosynthesis; L-histidine biosynthesis; L-histidine from 5-phospho-alpha-D-ribose 1-diphosphate: step 6/9. The polypeptide is Imidazoleglycerol-phosphate dehydratase (Streptococcus mutans serotype c (strain ATCC 700610 / UA159)).